Reading from the N-terminus, the 165-residue chain is Phosphopantetheine adenylyltransferase (165 aa).

Residue Thr-10 coordinates substrate. ATP contacts are provided by residues 10–11 and His-18; that span reads TF. Positions 42, 75, and 89 each coordinate substrate. ATP is bound by residues 90–92, Glu-100, and 125–131; these read GVR and YTYVAST.

The protein belongs to the bacterial CoaD family. In terms of assembly, homohexamer. The cofactor is Mg(2+).

The protein localises to the cytoplasm. It carries out the reaction (R)-4'-phosphopantetheine + ATP + H(+) = 3'-dephospho-CoA + diphosphate. It functions in the pathway cofactor biosynthesis; coenzyme A biosynthesis; CoA from (R)-pantothenate: step 4/5. Its function is as follows. Reversibly transfers an adenylyl group from ATP to 4'-phosphopantetheine, yielding dephospho-CoA (dPCoA) and pyrophosphate. This chain is Phosphopantetheine adenylyltransferase, found in Chlorobaculum tepidum (strain ATCC 49652 / DSM 12025 / NBRC 103806 / TLS) (Chlorobium tepidum).